The primary structure comprises 587 residues: Pyruvate decarboxylase 3 (587 aa).

Aspartate 48 and histidine 135 together coordinate substrate. The tract at residues 415–496 (DSWFNCQKLR…FLINNGGYTI (82 aa)) is thiamine pyrophosphate binding. Residues aspartate 464, asparagine 491, and glycine 493 each contribute to the Mg(2+) site. Glutamate 497 lines the substrate pocket.

This sequence belongs to the TPP enzyme family. Homotetramer. A metal cation serves as cofactor. The cofactor is thiamine diphosphate.

It carries out the reaction a 2-oxocarboxylate + H(+) = an aldehyde + CO2. This Oryza sativa subsp. indica (Rice) protein is Pyruvate decarboxylase 3 (PDC3).